Consider the following 251-residue polypeptide: CDP-diacylglycerol pyrophosphatase (251 aa).

Residues 4–24 traverse the membrane as a helical segment; that stretch reads AGLLFLVMIVIAVVAAGIGYW.

The protein belongs to the Cdh family.

It is found in the cell inner membrane. It carries out the reaction a CDP-1,2-diacyl-sn-glycerol + H2O = a 1,2-diacyl-sn-glycero-3-phosphate + CMP + 2 H(+). The protein operates within phospholipid metabolism; CDP-diacylglycerol degradation; phosphatidate from CDP-diacylglycerol: step 1/1. This chain is CDP-diacylglycerol pyrophosphatase, found in Escherichia coli (strain ATCC 8739 / DSM 1576 / NBRC 3972 / NCIMB 8545 / WDCM 00012 / Crooks).